Here is a 468-residue protein sequence, read N- to C-terminus: Aspartate ammonia-lyase (468 aa).

The L-aspartate site is built by T99, S138, T139, N140, and T185. An SS loop region spans residues 315-324 (GSSIMPGKVN). S316 (proton acceptor) is an active-site residue. S317 and K322 together coordinate L-aspartate.

This sequence belongs to the class-II fumarase/aspartase family. Aspartase subfamily. Homotetramer.

It carries out the reaction L-aspartate = fumarate + NH4(+). In terms of biological role, catalyzes the reversible conversion of L-aspartate to fumarate and ammonia. This Helicobacter pylori (strain J99 / ATCC 700824) (Campylobacter pylori J99) protein is Aspartate ammonia-lyase (aspA).